We begin with the raw amino-acid sequence, 85 residues long: UPF0473 protein CLK_1946 (85 aa).

Belongs to the UPF0473 family.

The chain is UPF0473 protein CLK_1946 from Clostridium botulinum (strain Loch Maree / Type A3).